Here is a 90-residue protein sequence, read N- to C-terminus: Small ribosomal subunit protein bS16 (90 aa).

It belongs to the bacterial ribosomal protein bS16 family.

This chain is Small ribosomal subunit protein bS16, found in Lactococcus lactis subsp. cremoris (strain SK11).